The following is a 424-amino-acid chain: UPF0229 protein Avin_46880 (424 aa).

The segment at 57–108 (RDIDEPVLHHGRGGKQTIVHPGNKEFTAGERIPRPSGGGGGGSGSGKASNSG) is disordered. Gly residues predominate over residues 92-101 (SGGGGGGSGS).

The protein belongs to the UPF0229 family.

This is UPF0229 protein Avin_46880 from Azotobacter vinelandii (strain DJ / ATCC BAA-1303).